Here is a 221-residue protein sequence, read N- to C-terminus: Cysteine-rich venom protein (221 aa).

Residue Gly-1 is a signal peptide. Residues 21-148 form the SCP domain; that stretch reads DLHNSLRRSV…EYKYFYVCQY (128 aa). Disulfide bonds link Cys-57-Cys-135, Cys-74-Cys-149, Cys-130-Cys-146, Cys-168-Cys-175, Cys-171-Cys-180, Cys-184-Cys-216, Cys-193-Cys-210, and Cys-201-Cys-214. The region spanning 184–216 is the ShKT domain; it reads CTHEDKFTNCKDLVKQGCNNNYLKTNCPASCSC.

The protein belongs to the CRISP family. Expressed by the venom gland.

Its subcellular location is the secreted. Its function is as follows. Blocks contraction of smooth muscle elicited by high potassium-induced depolarization, but does not block caffeine-stimulated contraction. May target voltage-gated calcium channels in smooth muscle. In Vipera nikolskii (Nikolsky's adder), this protein is Cysteine-rich venom protein.